We begin with the raw amino-acid sequence, 431 residues long: Enolase (431 aa).

Gln167 lines the (2R)-2-phosphoglycerate pocket. Glu209 functions as the Proton donor in the catalytic mechanism. Mg(2+) contacts are provided by Asp246, Glu289, and Asp316. (2R)-2-phosphoglycerate contacts are provided by Lys341, Arg370, Ser371, and Lys392. The active-site Proton acceptor is the Lys341.

The protein belongs to the enolase family. As to quaternary structure, component of the RNA degradosome, a multiprotein complex involved in RNA processing and mRNA degradation. The cofactor is Mg(2+).

Its subcellular location is the cytoplasm. It localises to the secreted. It is found in the cell surface. The enzyme catalyses (2R)-2-phosphoglycerate = phosphoenolpyruvate + H2O. It participates in carbohydrate degradation; glycolysis; pyruvate from D-glyceraldehyde 3-phosphate: step 4/5. Catalyzes the reversible conversion of 2-phosphoglycerate (2-PG) into phosphoenolpyruvate (PEP). It is essential for the degradation of carbohydrates via glycolysis. The protein is Enolase of Shewanella sediminis (strain HAW-EB3).